The chain runs to 293 residues: EID1-like F-box protein 1 (293 aa).

In terms of domain architecture, F-box spans 16 to 68; sequence QCTKGHLNEDVLLLVFQHLNWNPKLVATLSCVCRWFDDFAKRVLWKEFCKTRA. Residues 245–293 form a disordered region; sequence AIPSEDNNHTEKKQDNGFPRENVLKRRNSLLGGSENGPPPQKRLTNPNQ. Residues 250–259 show a composition bias toward basic and acidic residues; that stretch reads DNNHTEKKQD.

This is EID1-like F-box protein 1 (EDL1) from Arabidopsis thaliana (Mouse-ear cress).